The following is a 253-amino-acid chain: DNA repair protein RecO (253 aa).

Belongs to the RecO family.

Its function is as follows. Involved in DNA repair and RecF pathway recombination. This is DNA repair protein RecO from Dehalococcoides mccartyi (strain CBDB1).